Here is a 702-residue protein sequence, read N- to C-terminus: Palmitoyltransferase AKR1 (702 aa).

The segment covering 1 to 40 has biased composition (polar residues); that stretch reads MSTDAELQTISGLSVASKSAPSTQTEGVTASGKVESTTNA. The segment at 1–51 is disordered; sequence MSTDAELQTISGLSVASKSAPSTQTEGVTASGKVESTTNAEEATSDVEEEE. The Cytoplasmic portion of the chain corresponds to 1–299; it reads MSTDAELQTI…TTNLLCFFTP (299 aa). ANK repeat units follow at residues 49 to 80, 83 to 112, 117 to 147, 150 to 179, 183 to 212, and 216 to 245; these read EEENPLVVAARDGNTAEVKRLCESGSYSVLDT, DGVTALHWAAVNNRISTCQYLVEQGAVVDA, LNGTPLHWACRRGLVYIVHYLIQNGADPLRS, QGYNALHLATHSSNVMLLVYLLHQGLPVDC, NGRTALHWAAYQGDALSVDVLLRWGSDVKI, and QGFLPLHWGIVNGSRNSLARLIEEGSDMYA. The next 2 helical transmembrane spans lie at 300–320 and 321–341; these read FILILLGLVLCTFCGPIFGII and LTVATLFGSIKLLKTLVLPSL. At 342-354 the chain is on the cytoplasmic side; it reads YNGHAALLKSPFQ. A helical transmembrane segment spans residues 355 to 375; the sequence is AGIFTGSAFWVTVKYLTSVLP. Residues 376 to 379 lie on the Lumenal side of the membrane; sequence ATFA. The helical transmembrane segment at 380-400 threads the bilayer; sequence SHPILNFFFASIFGLAMYCFF. The Cytoplasmic portion of the chain corresponds to 401-479; it reads RCMSMDPGYI…WNAIGVRNHR (79 aa). A DHHC domain is found at 436–486; the sequence is HFCFVTYVRKPLRSKFCRQSKRVVARFDHFCPWVWNAIGVRNHRMFVLYVL. The active-site S-palmitoyl cysteine intermediate is the C466. A helical membrane pass occupies residues 480–500; that stretch reads MFVLYVLFLQIGIPLWLALNS. Residues 501-518 lie on the Lumenal side of the membrane; the sequence is AYFGELLEIKRWDPLEFY. The helical transmembrane segment at 519-539 threads the bilayer; it reads LVIWISLQLIWITFLSFVQIF. Topologically, residues 540-702 are cytoplasmic; that stretch reads QICRSLTTSE…GEALLAESQV (163 aa). The segment at 679-702 is disordered; sequence PNQQQTNNRSTREDGEALLAESQV.

Belongs to the DHHC palmitoyltransferase family. AKR/ZDHHC17 subfamily.

The protein localises to the early endosome membrane. Its subcellular location is the golgi apparatus membrane. It catalyses the reaction L-cysteinyl-[protein] + hexadecanoyl-CoA = S-hexadecanoyl-L-cysteinyl-[protein] + CoA. Its function is as follows. Palmitoyltransferase specific for casein kinase 1. This Yarrowia lipolytica (strain CLIB 122 / E 150) (Yeast) protein is Palmitoyltransferase AKR1 (AKR1).